The sequence spans 1002 residues: DNA-directed RNA polymerase 1, mitochondrial (1002 aa).

A mitochondrion-targeting transit peptide spans 1-21 (MWRYISKQAYSRKFRNSHDSA). Catalysis depends on residues aspartate 703, lysine 778, and aspartate 935.

Belongs to the phage and mitochondrial RNA polymerase family. The highest levels of expression are detected in the mature leaves. The level of expression is lowest in the cotyledons.

The protein resides in the mitochondrion. It carries out the reaction RNA(n) + a ribonucleoside 5'-triphosphate = RNA(n+1) + diphosphate. In terms of biological role, DNA-dependent RNA polymerase catalyzes the transcription of DNA into RNA using the four ribonucleoside triphosphates as substrates. The polypeptide is DNA-directed RNA polymerase 1, mitochondrial (RPOT1) (Nicotiana sylvestris (Wood tobacco)).